The sequence spans 446 residues: Maltoporin (446 aa).

Positions 1 to 25 are cleaved as a signal peptide; the sequence is MMITLRKLPLAVAVAAGVMSAQAMA.

The protein belongs to the porin LamB (TC 1.B.3) family. As to quaternary structure, homotrimer formed of three 18-stranded antiparallel beta-barrels, containing three independent channels.

It localises to the cell outer membrane. It catalyses the reaction beta-maltose(in) = beta-maltose(out). Its function is as follows. Involved in the transport of maltose and maltodextrins. The chain is Maltoporin from Escherichia coli O157:H7 (strain EC4115 / EHEC).